The sequence spans 300 residues: Bifunctional protein FolD 1 (300 aa).

NADP(+) is bound by residues G166–S168, S191, and I232.

This sequence belongs to the tetrahydrofolate dehydrogenase/cyclohydrolase family. Homodimer.

The enzyme catalyses (6R)-5,10-methylene-5,6,7,8-tetrahydrofolate + NADP(+) = (6R)-5,10-methenyltetrahydrofolate + NADPH. It carries out the reaction (6R)-5,10-methenyltetrahydrofolate + H2O = (6R)-10-formyltetrahydrofolate + H(+). Its pathway is one-carbon metabolism; tetrahydrofolate interconversion. Functionally, catalyzes the oxidation of 5,10-methylenetetrahydrofolate to 5,10-methenyltetrahydrofolate and then the hydrolysis of 5,10-methenyltetrahydrofolate to 10-formyltetrahydrofolate. The chain is Bifunctional protein FolD 1 from Roseobacter denitrificans (strain ATCC 33942 / OCh 114) (Erythrobacter sp. (strain OCh 114)).